A 963-amino-acid chain; its full sequence is Integrator complex subunit 4 (963 aa).

The residue at position 26 (Lys-26) is an N6-acetyllysine. 8 HEAT repeats span residues 66 to 105 (AESV…TAGF), 145 to 183 (QAIQ…LEKS), 190 to 228 (GLAA…RGLK), 229 to 263 (LHQT…SQLY), 277 to 313 (IRLV…EQVS), 369 to 405 (NLIE…AQSS), 406 to 444 (PSFA…NITL), and 446 to 484 (EDQL…GIHL). Lys-791 is covalently cross-linked (Glycyl lysine isopeptide (Lys-Gly) (interchain with G-Cter in SUMO1); alternate). A Glycyl lysine isopeptide (Lys-Gly) (interchain with G-Cter in SUMO2); alternate cross-link involves residue Lys-791.

Belongs to the Integrator subunit 4 family. In terms of assembly, component of the Integrator complex, composed of core subunits INTS1, INTS2, INTS3, INTS4, INTS5, INTS6, INTS7, INTS8, INTS9/RC74, INTS10, INTS11/CPSF3L, INTS12, INTS13, INTS14 and INTS15. The core complex associates with protein phosphatase 2A subunits PPP2CA and PPP2R1A, to form the Integrator-PP2A (INTAC) complex. INTS4 is part of the RNA endonuclease subcomplex, composed of INTS4, INTS9, INTS11 and inositol hexakisphosphate (InsP6). Interacts with BRAT1; interaction is required for the assembly of the RNA endonuclease subcomplex.

It localises to the nucleus. Its subcellular location is the cytoplasm. Component of the integrator complex, a multiprotein complex that terminates RNA polymerase II (Pol II) transcription in the promoter-proximal region of genes. The integrator complex provides a quality checkpoint during transcription elongation by driving premature transcription termination of transcripts that are unfavorably configured for transcriptional elongation: the complex terminates transcription by (1) catalyzing dephosphorylation of the C-terminal domain (CTD) of Pol II subunit POLR2A/RPB1 and SUPT5H/SPT5, (2) degrading the exiting nascent RNA transcript via endonuclease activity and (3) promoting the release of Pol II from bound DNA. The integrator complex is also involved in terminating the synthesis of non-coding Pol II transcripts, such as enhancer RNAs (eRNAs), small nuclear RNAs (snRNAs), telomerase RNAs and long non-coding RNAs (lncRNAs). Within the integrator complex, INTS4 acts as an scaffold that links INTS9 and INTS11. Mediates recruitment of cytoplasmic dynein to the nuclear envelope, probably as component of the integrator complex. The protein is Integrator complex subunit 4 of Homo sapiens (Human).